We begin with the raw amino-acid sequence, 596 residues long: Chitooligosaccharidolytic beta-N-acetylglucosaminidase (596 aa).

A signal peptide spans 1 to 23 (MWLQAICIYTVFIIIGCGIPTAA). Residues asparagine 166, asparagine 264, and asparagine 377 are each glycosylated (N-linked (GlcNAc...) asparagine).

The protein belongs to the glycosyl hydrolase 20 family.

It catalyses the reaction Hydrolysis of terminal non-reducing N-acetyl-D-hexosamine residues in N-acetyl-beta-D-hexosaminides.. Active during metamorphosis to degrade chitin. The sequence is that of Chitooligosaccharidolytic beta-N-acetylglucosaminidase from Bombyx mori (Silk moth).